Consider the following 438-residue polypeptide: Glutamate-1-semialdehyde 2,1-aminomutase (438 aa).

N6-(pyridoxal phosphate)lysine is present on K272.

This sequence belongs to the class-III pyridoxal-phosphate-dependent aminotransferase family. HemL subfamily. As to quaternary structure, homodimer. Requires pyridoxal 5'-phosphate as cofactor.

It is found in the cytoplasm. It carries out the reaction (S)-4-amino-5-oxopentanoate = 5-aminolevulinate. Its pathway is porphyrin-containing compound metabolism; protoporphyrin-IX biosynthesis; 5-aminolevulinate from L-glutamyl-tRNA(Glu): step 2/2. The protein operates within porphyrin-containing compound metabolism; chlorophyll biosynthesis. The polypeptide is Glutamate-1-semialdehyde 2,1-aminomutase (Chloroflexus aggregans (strain MD-66 / DSM 9485)).